The following is a 460-amino-acid chain: SPbeta prophage-derived uncharacterized protein YopQ (460 aa).

The protein is SPbeta prophage-derived uncharacterized protein YopQ (yopQ) of Bacillus subtilis (strain 168).